Here is a 129-residue protein sequence, read N- to C-terminus: Small ribosomal subunit protein uS9 (129 aa).

The protein belongs to the universal ribosomal protein uS9 family.

This chain is Small ribosomal subunit protein uS9, found in Helicobacter acinonychis (strain Sheeba).